The primary structure comprises 231 residues: Ribosomal RNA small subunit methyltransferase G (231 aa).

S-adenosyl-L-methionine-binding positions include glycine 92, leucine 97, valine 143–glutamate 144, and arginine 162.

Belongs to the methyltransferase superfamily. RNA methyltransferase RsmG family.

The protein resides in the cytoplasm. It carries out the reaction guanosine(527) in 16S rRNA + S-adenosyl-L-methionine = N(7)-methylguanosine(527) in 16S rRNA + S-adenosyl-L-homocysteine. Functionally, specifically methylates the N7 position of guanine in position 527 of 16S rRNA. The chain is Ribosomal RNA small subunit methyltransferase G from Burkholderia thailandensis (strain ATCC 700388 / DSM 13276 / CCUG 48851 / CIP 106301 / E264).